We begin with the raw amino-acid sequence, 24 residues long: GFKDWIKGAAKKLIKTVASSIANE.

In terms of tissue distribution, expressed by the skin glands.

It is found in the secreted. Antimicrobial peptide that shows higher potency against Gram-negative bacteria than against Gram-positive bacteria. Has a very week hemolytic activity. This chain is Ascaphin-6, found in Ascaphus truei (Coastal tailed frog).